The following is a 376-amino-acid chain: Multiphosphoryl transfer protein (376 aa).

One can recognise a PTS EIIA type-2 domain in the interval 2-142; the sequence is FQLSVQDIHP…EELRALLMGE (141 aa). The active-site Tele-phosphohistidine intermediate; for EIIA activity is the histidine 62. A Phosphohistidine; by HPr modification is found at histidine 62. Residues 156–284 are m domain; the sequence is TLDVIASSLV…LTSDDALTDD (129 aa). The HPr domain occupies 285–375; sequence VLSAEFVVRN…DAIAAGLGEG (91 aa). Catalysis depends on histidine 299, which acts as the Pros-phosphohistidine intermediate; for HPr activity. A Phosphohistidine; by EI modification is found at histidine 299.

It is found in the cytoplasm. In terms of biological role, the phosphoenolpyruvate-dependent sugar phosphotransferase system (sugar PTS), a major carbohydrate active transport system, catalyzes the phosphorylation of incoming sugar substrates concomitantly with their translocation across the cell membrane. The enzyme II FruAB PTS system is involved in fructose transport. In Salmonella typhi, this protein is Multiphosphoryl transfer protein (fruB).